The following is a 67-amino-acid chain: Large ribosomal subunit protein bL35 (67 aa).

It belongs to the bacterial ribosomal protein bL35 family.

This chain is Large ribosomal subunit protein bL35, found in Dehalococcoides mccartyi (strain ATCC BAA-2100 / JCM 16839 / KCTC 5957 / BAV1).